Reading from the N-terminus, the 1844-residue chain is ATPase family AAA domain-containing protein 5 (1844 aa).

A Phosphoserine modification is found at Ser-44. Lys-127 is covalently cross-linked (Glycyl lysine isopeptide (Lys-Gly) (interchain with G-Cter in SUMO2)). The span at 178–199 shows a compositional bias: polar residues; sequence QPNTMTSLQNSKKVNPKQGTTK. The segment at 178–204 is disordered; the sequence is QPNTMTSLQNSKKVNPKQGTTKNDFKK. Phosphoserine is present on residues Ser-219, Ser-306, Ser-311, Ser-354, and Ser-369. The interval 368–384 is interaction with WDR48; sequence KSNVVIQEEELELAVLE. Disordered regions lie at residues 477-499, 580-623, and 658-700; these read KLKK…REGN, ESEA…NSQL, and KFTR…SKNI. Polar residues-rich tracts occupy residues 580 to 592 and 599 to 608; these read ESEA…STPK and RISSTPTTET. Phosphoserine is present on residues Ser-602, Ser-614, and Ser-621. The span at 664-673 shows a compositional bias: basic residues; the sequence is TPKKSKKKSN. The span at 685 to 700 shows a compositional bias: polar residues; that stretch reads GFTSQIRKASNTSKNI. Ser-817 carries the phosphoserine modification. 2 stretches are compositionally biased toward basic and acidic residues: residues 987-1032 and 1092-1106; these read LEAD…ELSK and RQNL…HEDF. Disordered stretches follow at residues 987 to 1047 and 1092 to 1118; these read LEAD…SKDS and RQNL…SSDD. The residue at position 1116 (Ser-1116) is a Phosphoserine. Residue 1132-1139 coordinates ATP; that stretch reads GPTGVGKT. Disordered stretches follow at residues 1203-1235 and 1272-1292; these read KKIS…LPPK and ITQT…GAEE. Residues 1272 to 1285 are compositionally biased toward polar residues; that stretch reads ITQTKSTNATNSNV. An LXCXE motif motif is present at residues 1428–1432; the sequence is LVCSE. The disordered stretch occupies residues 1591–1635; it reads SLSSVSSSSNAEESKTGDEESKARDKGNNPETKKSIPCPPKTTAG. Positions 1602-1624 are enriched in basic and acidic residues; it reads EESKTGDEESKARDKGNNPETKK. Residues 1630–1719 form an interaction with RAD51 and RFC5 region; that stretch reads PKTTAGKKCS…AAAEALSFTK (90 aa).

It belongs to the AAA ATPase family. In terms of assembly, component of a heteropentameric replication factor ATAD5 RFC-like complex composed of one large subunit (ATAD5) and four small subunits (RFC2, RFC3, RFC4 and RFC5). Within the ATAD5 RFC-like complex, interacts with RFC2, RFC4 and RFC5. Within the ATAD5 RFC-like complex, interacts directly via-N terminal with RAD51; the interactions is enhanced under replication stress. Interacts with RB1 predominantly in G1 phase via its LXCXE motif. Interacts with RAD9A in growing cells. The interaction with RAD9A is reduced after exposure to DNA replication-inhibiting agents. Interacts with BRD4. Interacts with PCNA. Interacts with deubiquitinating enzyme USP1, and its associated factor, WDR48. In terms of processing, ATR may stimulate the RAD9A dissociation.

The protein resides in the nucleus. Its function is as follows. Has an important role in DNA replication and in maintaining genome integrity during replication stress. Involved in a RAD9A-related damage checkpoint, a pathway that is important in determining whether DNA damage is compatible with cell survival or whether it requires cell elimination by apoptosis. Modulates the RAD9A interaction with BCL2 and thereby induces DNA damage-induced apoptosis. Promotes PCNA deubiquitination by recruiting the ubiquitin-specific protease 1 (USP1) and WDR48 thereby down-regulating the error-prone damage bypass pathway. As component of the ATAD5 RFC-like complex, regulates the function of the DNA polymerase processivity factor PCNA by unloading the ring-shaped PCNA homotrimer from DNA after replication during the S phase of the cell cycle. This seems to be dependent on its ATPase activity. Plays important roles in restarting stalled replication forks under replication stress, by unloading the PCNA homotrimer from DNA and recruiting RAD51 possibly through an ATR-dependent manner. Ultimately this enables replication fork regression, breakage, and eventual fork restart. Both the PCNA unloading activity and the interaction with WDR48 are required to efficiently recruit RAD51 to stalled replication forks. Promotes the generation of MUS81-mediated single-stranded DNA-associated breaks in response to replication stress, which is an alternative pathway to restart stalled/regressed replication forks. The sequence is that of ATPase family AAA domain-containing protein 5 from Homo sapiens (Human).